The primary structure comprises 167 residues: Beta-3 adrenergic receptor (167 aa).

Over 1 to 25 (RVGADAEAQECHSNPRCCSFASNMP) the chain is Extracellular. Cysteines 11 and 17 form a disulfide. The chain crosses the membrane as a helical span at residues 26–47 (YALLSSSVSFYLPLLVMLFVYA). Residues 48-114 (RVFVVAKRQR…LPLREHRALR (67 aa)) are Cytoplasmic-facing. Residues 66 to 97 (RFPPEESPRSPSRSPSPVAGGTGEAPDGVPSC) are disordered. A helical membrane pass occupies residues 115–136 (TLGLIMGIFSLCWLPFFLANVL). Residues 137–148 (RALAGPSIVPNG) are Extracellular-facing. A helical transmembrane segment spans residues 149-167 (VFIALNWLGYANSAFNPLI).

This sequence belongs to the G-protein coupled receptor 1 family. Adrenergic receptor subfamily. ADRB3 sub-subfamily. In terms of assembly, interacts with ARRDC3.

It is found in the cell membrane. Beta-adrenergic receptors mediate the catecholamine-induced activation of adenylate cyclase through the action of G proteins. Beta-3 is involved in the regulation of lipolysis and thermogenesis. The sequence is that of Beta-3 adrenergic receptor (ADRB3) from Meriones unguiculatus (Mongolian jird).